A 570-amino-acid polypeptide reads, in one-letter code: AT-rich interactive domain-containing protein 3A (570 aa).

The disordered stretch occupies residues 102–215 (AGVPNSSSGH…LAPQAQSQHH (114 aa)). Residues 120–160 (DIDDEDDEDDDPELDRGMDDEERDMDEDDSMNEGGGDEDLE) are compositionally biased toward acidic residues. The residue at position 179 (Ser179) is a Phosphoserine. The ARID domain maps to 232-324 (DEKRKEFLDD…YLYPYECEKR (93 aa)). A Phosphoserine modification is found at Ser356. One can recognise an REKLES domain in the interval 429–523 (AALEQLREKL…GVLFARKPAI (95 aa)). The important for nuclear localization stretch occupies residues 430-473 (ALEQLREKLESGEPPEKKVMLMAEEQQRIMQHALQQNLFAMATQ). Residues 475–495 (PMNIKLNNRDDRQETALNLST) are homodimerization. An important for cytoplasmic localization region spans residues 519-531 (RKPAIGFMPSSQR). The interval 528-570 (SSQRVHHQHSSQGKSNSPGLSSHIQPSSSASSSASSHGPATSP) is disordered. Phosphoserine occurs at positions 542 and 569. The segment covering 548-570 (SSHIQPSSSASSSASSHGPATSP) has biased composition (low complexity).

Homodimer.

It is found in the nucleus. It localises to the cytoplasm. In terms of biological role, transcription factor. This chain is AT-rich interactive domain-containing protein 3A (arid3a), found in Danio rerio (Zebrafish).